The sequence spans 145 residues: Large ribosomal subunit protein uL15 (145 aa).

Positions 20-39 are disordered; it reads GRVGKHRKHPSGRGNAGGEH.

This sequence belongs to the universal ribosomal protein uL15 family.

This is Large ribosomal subunit protein uL15 (RPL27A) from Trypanosoma brucei brucei.